We begin with the raw amino-acid sequence, 532 residues long: Glucose-6-phosphate isomerase (532 aa).

The Proton donor role is filled by Glu330. Catalysis depends on residues His359 and Lys461.

This sequence belongs to the GPI family.

It is found in the cytoplasm. It carries out the reaction alpha-D-glucose 6-phosphate = beta-D-fructose 6-phosphate. The protein operates within carbohydrate biosynthesis; gluconeogenesis. It participates in carbohydrate degradation; glycolysis; D-glyceraldehyde 3-phosphate and glycerone phosphate from D-glucose: step 2/4. Its function is as follows. Catalyzes the reversible isomerization of glucose-6-phosphate to fructose-6-phosphate. The protein is Glucose-6-phosphate isomerase of Synechococcus sp. (strain CC9605).